A 124-amino-acid chain; its full sequence is Small ribosomal subunit protein uS12cz/uS12cy (124 aa).

Belongs to the universal ribosomal protein uS12 family. As to quaternary structure, part of the 30S ribosomal subunit.

It localises to the plastid. The protein localises to the chloroplast. Its function is as follows. With S4 and S5 plays an important role in translational accuracy. Located at the interface of the 30S and 50S subunits. The polypeptide is Small ribosomal subunit protein uS12cz/uS12cy (rps12-A) (Zea mays (Maize)).